Reading from the N-terminus, the 254-residue chain is 3-deoxy-manno-octulosonate cytidylyltransferase (254 aa).

It belongs to the KdsB family.

The protein resides in the cytoplasm. The catalysed reaction is 3-deoxy-alpha-D-manno-oct-2-ulosonate + CTP = CMP-3-deoxy-beta-D-manno-octulosonate + diphosphate. It participates in nucleotide-sugar biosynthesis; CMP-3-deoxy-D-manno-octulosonate biosynthesis; CMP-3-deoxy-D-manno-octulosonate from 3-deoxy-D-manno-octulosonate and CTP: step 1/1. Its pathway is bacterial outer membrane biogenesis; lipopolysaccharide biosynthesis. Functionally, activates KDO (a required 8-carbon sugar) for incorporation into bacterial lipopolysaccharide in Gram-negative bacteria. In Chlamydia abortus (strain DSM 27085 / S26/3) (Chlamydophila abortus), this protein is 3-deoxy-manno-octulosonate cytidylyltransferase.